The primary structure comprises 123 residues: Small ribosomal subunit protein uS12 (123 aa).

Asp89 bears the 3-methylthioaspartic acid mark.

This sequence belongs to the universal ribosomal protein uS12 family. Part of the 30S ribosomal subunit. Contacts proteins S8 and S17. May interact with IF1 in the 30S initiation complex.

With S4 and S5 plays an important role in translational accuracy. Its function is as follows. Interacts with and stabilizes bases of the 16S rRNA that are involved in tRNA selection in the A site and with the mRNA backbone. Located at the interface of the 30S and 50S subunits, it traverses the body of the 30S subunit contacting proteins on the other side and probably holding the rRNA structure together. The combined cluster of proteins S8, S12 and S17 appears to hold together the shoulder and platform of the 30S subunit. The protein is Small ribosomal subunit protein uS12 of Syntrophobacter fumaroxidans (strain DSM 10017 / MPOB).